A 417-amino-acid polypeptide reads, in one-letter code: Carbon catabolite repressor protein 4 homolog 4 (417 aa).

Phe2 bears the N-acetylserine mark. Glu143 is a binding site for Mg(2+).

This sequence belongs to the CCR4/nocturin family. Component of the CCR4-NOT complex, at least composed of CRR4 and CAF1 proteins. Forms homooligomers. Mg(2+) is required as a cofactor.

The protein resides in the nucleus. The protein localises to the cytoplasm. It catalyses the reaction Exonucleolytic cleavage of poly(A) to 5'-AMP.. In terms of biological role, acts as a catalytic component of the CCR4-NOT core complex, which in the nucleus seems to be a general transcription factor, and in the cytoplasm the major mRNA deadenylase involved in mRNA turnover. Transcriptional regulator of circadian rhythms with poly(A)-degrading activity that affects the expression and rhythmicity of the clock core oscillator genes TOC1 and CCA1. Deadenylation may be a mechanism involved in the regulation of the circadian clock. May play a negative role in response against oxidative stress. Possesses magnesium-dependent poly(A)-specific exoribonuclease activity in vitro and is almost inactive with poly(U), poly(C) and poly(G) as substrates. This Arabidopsis thaliana (Mouse-ear cress) protein is Carbon catabolite repressor protein 4 homolog 4.